A 263-amino-acid chain; its full sequence is UPF0739 protein C1orf74 homolog (263 aa).

It belongs to the UPF0739 family.

In Bos taurus (Bovine), this protein is UPF0739 protein C1orf74 homolog.